Consider the following 327-residue polypeptide: Lipoyl synthase (327 aa).

[4Fe-4S] cluster contacts are provided by C75, C80, C86, C101, C105, C108, and S315. Positions 87–304 (FGNGTATFMI…EEEAYKMGFS (218 aa)) constitute a Radical SAM core domain.

The protein belongs to the radical SAM superfamily. Lipoyl synthase family. [4Fe-4S] cluster serves as cofactor.

Its subcellular location is the cytoplasm. The enzyme catalyses [[Fe-S] cluster scaffold protein carrying a second [4Fe-4S](2+) cluster] + N(6)-octanoyl-L-lysyl-[protein] + 2 oxidized [2Fe-2S]-[ferredoxin] + 2 S-adenosyl-L-methionine + 4 H(+) = [[Fe-S] cluster scaffold protein] + N(6)-[(R)-dihydrolipoyl]-L-lysyl-[protein] + 4 Fe(3+) + 2 hydrogen sulfide + 2 5'-deoxyadenosine + 2 L-methionine + 2 reduced [2Fe-2S]-[ferredoxin]. It functions in the pathway protein modification; protein lipoylation via endogenous pathway; protein N(6)-(lipoyl)lysine from octanoyl-[acyl-carrier-protein]: step 2/2. In terms of biological role, catalyzes the radical-mediated insertion of two sulfur atoms into the C-6 and C-8 positions of the octanoyl moiety bound to the lipoyl domains of lipoate-dependent enzymes, thereby converting the octanoylated domains into lipoylated derivatives. This is Lipoyl synthase from Variovorax paradoxus (strain S110).